Consider the following 902-residue polypeptide: HTH-type transcriptional regulator MalT (902 aa).

Residue 39 to 46 (SPAGYGKT) participates in ATP binding. The HTH luxR-type domain occupies 832–897 (ELVRTSPLTQ…EAVQTAEQLL (66 aa)). The H-T-H motif DNA-binding region spans 856–875 (NEQIAHELDVAGTTIKTHIR).

This sequence belongs to the MalT family. As to quaternary structure, monomer in solution. Oligomerizes to an active state in the presence of the positive effectors ATP and maltotriose.

Activated by ATP and maltotriose, which are both required for DNA binding. Positively regulates the transcription of the maltose regulon whose gene products are responsible for uptake and catabolism of malto-oligosaccharides. Specifically binds to the promoter region of its target genes, recognizing a short DNA motif called the MalT box. In Vibrio cholerae serotype O1 (strain ATCC 39315 / El Tor Inaba N16961), this protein is HTH-type transcriptional regulator MalT.